The following is a 126-amino-acid chain: Large ribosomal subunit protein bL12 (126 aa).

Belongs to the bacterial ribosomal protein bL12 family. As to quaternary structure, homodimer. Part of the ribosomal stalk of the 50S ribosomal subunit. Forms a multimeric L10(L12)X complex, where L10 forms an elongated spine to which 2 to 4 L12 dimers bind in a sequential fashion. Binds GTP-bound translation factors.

Functionally, forms part of the ribosomal stalk which helps the ribosome interact with GTP-bound translation factors. Is thus essential for accurate translation. This chain is Large ribosomal subunit protein bL12, found in Paracidovorax citrulli (strain AAC00-1) (Acidovorax citrulli).